A 2091-amino-acid chain; its full sequence is Protein Ycf2 (2091 aa).

Residues 191-210 are disordered; sequence DSSQLKGSSDQSRDPLDSIS. 1432 to 1439 is an ATP binding site; it reads GSIGTGRS.

This sequence belongs to the Ycf2 family.

The protein localises to the plastid. It is found in the chloroplast stroma. Its function is as follows. Probable ATPase of unknown function. Its presence in a non-photosynthetic plant (Epifagus virginiana) and experiments in tobacco indicate that it has an essential function which is probably not related to photosynthesis. The protein is Protein Ycf2 of Daucus carota (Wild carrot).